The chain runs to 383 residues: Acetylornithine deacetylase (383 aa).

Position 80 (histidine 80) interacts with Zn(2+). Aspartate 82 is a catalytic residue. Aspartate 112 serves as a coordination point for Zn(2+). The active site involves glutamate 144. Residues glutamate 145, glutamate 169, and histidine 355 each contribute to the Zn(2+) site.

Belongs to the peptidase M20A family. ArgE subfamily. Homodimer. Requires Zn(2+) as cofactor. The cofactor is Co(2+). Glutathione serves as cofactor.

The protein resides in the cytoplasm. The catalysed reaction is N(2)-acetyl-L-ornithine + H2O = L-ornithine + acetate. It participates in amino-acid biosynthesis; L-arginine biosynthesis; L-ornithine from N(2)-acetyl-L-ornithine (linear): step 1/1. In terms of biological role, catalyzes the hydrolysis of the amide bond of N(2)-acetylated L-amino acids. Cleaves the acetyl group from N-acetyl-L-ornithine to form L-ornithine, an intermediate in L-arginine biosynthesis pathway, and a branchpoint in the synthesis of polyamines. The chain is Acetylornithine deacetylase from Salmonella choleraesuis (strain SC-B67).